Consider the following 164-residue polypeptide: Endoribonuclease YbeY (164 aa).

H117, H121, and H127 together coordinate Zn(2+).

Belongs to the endoribonuclease YbeY family. The cofactor is Zn(2+).

It is found in the cytoplasm. Single strand-specific metallo-endoribonuclease involved in late-stage 70S ribosome quality control and in maturation of the 3' terminus of the 16S rRNA. In Mycoplasma mycoides subsp. mycoides SC (strain CCUG 32753 / NCTC 10114 / PG1), this protein is Endoribonuclease YbeY.